A 355-amino-acid chain; its full sequence is MYNFVKIFRSNFIDINAANKLEIFLKTILRIYKTPARTHLLAHAADISAIYAVREIYNYMKNDEEGRIILKEKPLLIRQDIQFNELKKLPKNTLGYKYMEFLETYKLHAHDREVSHFFTDLNYSYILTRYRQIHDIGHVVYNLNISIESEAALKVIELVQTKLPITALAILIAPLMTPLYRFQYIFKDSIPSNFLTPNFDYTYNDAYNYVDELSIKQYEYNLTDYFHVDKRDDQKFYSKMYQYYLDNINNSSAVRGSIIYGFENKSNNDIIYDHPNREYIFLKNLKKKHLLFQYKPRKNLLRELYPWAYMAGVSTTKPLHSIHIEKWLDKDIDLFRRTYNISPLPDHLNLMAGIN.

Positions 134, 135, 138, and 150 each coordinate Zn(2+).

The protein belongs to the COQ4 family. As to quaternary structure, component of a multi-subunit COQ enzyme complex. Zn(2+) serves as cofactor.

It is found in the mitochondrion inner membrane. The enzyme catalyses a 4-hydroxy-3-methoxy-5-(all-trans-polyprenyl)benzoate + H(+) = a 2-methoxy-6-(all-trans-polyprenyl)phenol + CO2. The protein operates within cofactor biosynthesis; ubiquinone biosynthesis. In terms of biological role, lyase that catalyzes the C1-decarboxylation of 4-hydroxy-3-methoxy-5-(all-trans-polyprenyl)benzoic acid into 2-methoxy-6-(all-trans-polyprenyl)phenol during ubiquinone biosynthesis. This chain is Ubiquinone biosynthesis protein COQ4 homolog, mitochondrial, found in Plasmodium knowlesi (strain H).